The primary structure comprises 486 residues: Chromosomal replication initiator protein DnaA (486 aa).

The tract at residues 1–79 (MEKSKNIWSL…GYNNIVIVFT (79 aa)) is domain I, interacts with DnaA modulators. Residues 79 to 141 (TNQPPKTHSN…EEEPTNFKNP (63 aa)) form a domain II region. Residues 142-358 (FLKKRYTFEN…AAVTKLKAYI (217 aa)) are domain III, AAA+ region. ATP is bound by residues G186, G188, K189, and T190. The tract at residues 359–486 (DLDNIEIDIE…TELMNKIKKN (128 aa)) is domain IV, binds dsDNA.

This sequence belongs to the DnaA family. Oligomerizes as a right-handed, spiral filament on DNA at oriC.

It is found in the cytoplasm. Plays an essential role in the initiation and regulation of chromosomal replication. ATP-DnaA binds to the origin of replication (oriC) to initiate formation of the DNA replication initiation complex once per cell cycle. Binds the DnaA box (a 9 base pair repeat at the origin) and separates the double-stranded (ds)DNA. Forms a right-handed helical filament on oriC DNA; dsDNA binds to the exterior of the filament while single-stranded (ss)DNA is stabiized in the filament's interior. The ATP-DnaA-oriC complex binds and stabilizes one strand of the AT-rich DNA unwinding element (DUE), permitting loading of DNA polymerase. After initiation quickly degrades to an ADP-DnaA complex that is not apt for DNA replication. Binds acidic phospholipids. Its function is as follows. Binds to the bpuR promoter, possibly at 5'-TTTTTAAA-3'. In Borreliella burgdorferi (strain ATCC 35210 / DSM 4680 / CIP 102532 / B31) (Borrelia burgdorferi), this protein is Chromosomal replication initiator protein DnaA.